Here is a 21-residue protein sequence, read N- to C-terminus: Preblooming protein 2 (21 aa).

Its function is as follows. Possible mediator for cell division in the blooming process. The sequence is that of Preblooming protein 2 from Prorocentrum triestinum (Red tide alga).